A 292-amino-acid chain; its full sequence is Polyisoprenoid diphosphate/phosphate phosphohydrolase PLPP6 (292 aa).

2 disordered regions span residues 1-34 and 66-86; these read MPSPRRTIEGRPLGSSGGSSVPGSPAHGGGSGGG and GSFPLAASGPAQAAPAPPPED. The Cytoplasmic portion of the chain corresponds to 1 to 131; that stretch reads MPSPRRTIEG…SAWGSVRPLM (131 aa). A compositionally biased stretch (low complexity) spans 10-25; sequence GRPLGSSGGSSVPGSP. 2 positions are modified to phosphoserine: Ser24 and Ser67. Positions 69-79 are enriched in low complexity; sequence PLAASGPAQAA. The chain crosses the membrane as a helical span at residues 132-152; the sequence is KLLEISGHGIPWLLGTLYCLL. Residues 153–161 lie on the Lumenal side of the membrane; that stretch reads RSDSWAGRE. Residues 162–182 traverse the membrane as a helical segment; that stretch reads VLMNLLFALLLDLLLVAVIKG. Residues 181–189 are phosphatase sequence motif I; that stretch reads KGLVRRRRP. The Cytoplasmic portion of the chain corresponds to 183–225; it reads LVRRRRPAHNQKDMFFTLSVDRYSFPSGHATRAALVSRFILNH. Positions 208-211 are phosphatase sequence motif II; it reads PSGH. The active-site Proton donors is His211. A helical membrane pass occupies residues 226–246; it reads LVLAIPLRVLVVLWAFVLGLS. Residues 246–257 are phosphatase sequence motif III; it reads SRVMLGRHNVTD. Residues 247-257 lie on the Lumenal side of the membrane; the sequence is RVMLGRHNVTD. His253 functions as the Nucleophile in the catalytic mechanism. A helical transmembrane segment spans residues 258–278; it reads VAFGFFLGYMQYSIVDYCWLS. Residues 279–292 are Cytoplasmic-facing; it reads PHNVPVLFVLWNQQ.

The protein belongs to the PA-phosphatase related phosphoesterase family. Post-translationally, phosphorylation by PKC activates the phosphatase activity towards presqualene diphosphate.

Its subcellular location is the endoplasmic reticulum membrane. It localises to the nucleus envelope. The protein resides in the nucleus inner membrane. It carries out the reaction presqualene diphosphate + H2O = presqualene phosphate + phosphate + H(+). It catalyses the reaction presqualene phosphate + H2O = presqualene alcohol + phosphate. The catalysed reaction is (2E,6E)-farnesyl diphosphate + H2O = (2E,6E)-farnesyl phosphate + phosphate + H(+). The enzyme catalyses (2E,6E)-farnesyl phosphate + H2O = (2E,6E)-farnesol + phosphate. It carries out the reaction (2E,6E,10E)-geranylgeranyl diphosphate + H2O = (2E,6E,10E)-geranylgeranyl phosphate + phosphate + H(+). It catalyses the reaction (2E,6E,10E)-geranylgeranyl phosphate + H2O = (2E,6E,10E)-geranylgeraniol + phosphate. The catalysed reaction is (2E)-geranyl diphosphate + H2O = (2E)-geranyl phosphate + phosphate + H(+). The enzyme catalyses (2E)-geranyl phosphate + H2O = (2E)-geraniol + phosphate. It carries out the reaction 1,2-dihexadecanoyl-sn-glycero-3-phosphate + H2O = 1,2-dihexadecanoyl-sn-glycerol + phosphate. Magnesium-independent polyisoprenoid diphosphatase that catalyzes the sequential dephosphorylation of presqualene, farnesyl, geranyl and geranylgeranyl diphosphates. Functions in the innate immune response through the dephosphorylation of presqualene diphosphate which acts as a potent inhibitor of the signaling pathways contributing to polymorphonuclear neutrophils activation. May regulate the biosynthesis of cholesterol and related sterols by dephosphorylating presqualene and farnesyl diphosphate, two key intermediates in this biosynthetic pathway. May also play a role in protein prenylation by acting on farnesyl diphosphate and its derivative geranylgeranyl diphosphate, two precursors for the addition of isoprenoid anchors to membrane proteins. Has a lower activity towards phosphatidic acid (PA), but through phosphatidic acid dephosphorylation may participate in the biosynthesis of phospholipids and triacylglycerols. May also act on ceramide-1-P, lysophosphatidic acid (LPA) and sphing-4-enine 1-phosphate/sphingosine-1-phosphate. The protein is Polyisoprenoid diphosphate/phosphate phosphohydrolase PLPP6 of Mus musculus (Mouse).